The chain runs to 149 residues: Transcriptional repressor NrdR (149 aa).

Residues 3 to 34 fold into a zinc finger; sequence CPFCSEQETKVIDSRLVAEGQQVRRRRECMVC. One can recognise an ATP-cone domain in the interval 49–139; the sequence is PRVIKRDGSR…VYRSFEDIRE (91 aa).

This sequence belongs to the NrdR family. Requires Zn(2+) as cofactor.

Negatively regulates transcription of bacterial ribonucleotide reductase nrd genes and operons by binding to NrdR-boxes. This Alteromonas mediterranea (strain DSM 17117 / CIP 110805 / LMG 28347 / Deep ecotype) protein is Transcriptional repressor NrdR.